We begin with the raw amino-acid sequence, 694 residues long: Pentatricopeptide repeat-containing protein At3g12770 (694 aa).

13 PPR repeats span residues 52 to 82 (SGFLITKLIHASSSFGDITFARQVFDDLPRP), 83 to 117 (QIFPWNAIIRGYSRNNHFQDALLMYSNMQLARVSP), 118 to 152 (DSFTFPHLLKACSGLSHLQMGRFVHAQVFRLGFDA), 153 to 183 (DVFVQNGLIALYAKCRRLGSARTVFEGLPLP), 186 to 220 (TIVSWTAIVSAYAQNGEPMEALEIFSQMRKMDVKP), 221 to 255 (DWVALVSVLNAFTCLQDLKQGRSIHASVVKMGLEI), 256 to 286 (EPDLLISLNTMYAKCGQVATAKILFDKMKSP), 287 to 321 (NLILWNAMISGYAKNGYAREAIDMFHEMINKDVRP), 322 to 356 (DTISITSAISACAQVGSLEQARSMYEYVGRSDYRD), 357 to 387 (DVFISSALIDMFAKCGSVEGARLVFDRTLDR), 388 to 422 (DVVVWSAMIVGYGLHGRAREAISLYRAMERGGVHP), 423 to 457 (NDVTFLGLLMACNHSGMVREGWWFFNRMADHKINP), and 458 to 488 (QQQHYACVIDLLGRAGHLDQAYEVIKCMPVQ). The interval 493-568 (VWGALLSACK…DVGCSWVEVR (76 aa)) is type E motif. The interval 569 to 599 (GRLEAFRVGDKSHPRYEEIERQVEWIESRLK) is type E(+) motif. A type DYW motif region spans residues 600-694 (EGGFVANKDA…DGVCSCGDYW (95 aa)).

Belongs to the PPR family. PCMP-H subfamily.

This is Pentatricopeptide repeat-containing protein At3g12770 (PCMP-H43) from Arabidopsis thaliana (Mouse-ear cress).